We begin with the raw amino-acid sequence, 261 residues long: Pyridoxine 5'-phosphate synthase (261 aa).

Asn6 is a binding site for 3-amino-2-oxopropyl phosphate. Residue 8 to 9 (DH) coordinates 1-deoxy-D-xylulose 5-phosphate. 3-amino-2-oxopropyl phosphate is bound at residue Arg17. His42 acts as the Proton acceptor in catalysis. 1-deoxy-D-xylulose 5-phosphate contacts are provided by Arg44 and His49. Glu69 acts as the Proton acceptor in catalysis. Thr99 is a binding site for 1-deoxy-D-xylulose 5-phosphate. The active-site Proton donor is the His213. Residues Gly214 and 235–236 (GQ) contribute to the 3-amino-2-oxopropyl phosphate site.

The protein belongs to the PNP synthase family. As to quaternary structure, homooctamer; tetramer of dimers.

The protein resides in the cytoplasm. It catalyses the reaction 3-amino-2-oxopropyl phosphate + 1-deoxy-D-xylulose 5-phosphate = pyridoxine 5'-phosphate + phosphate + 2 H2O + H(+). The protein operates within cofactor biosynthesis; pyridoxine 5'-phosphate biosynthesis; pyridoxine 5'-phosphate from D-erythrose 4-phosphate: step 5/5. Catalyzes the complicated ring closure reaction between the two acyclic compounds 1-deoxy-D-xylulose-5-phosphate (DXP) and 3-amino-2-oxopropyl phosphate (1-amino-acetone-3-phosphate or AAP) to form pyridoxine 5'-phosphate (PNP) and inorganic phosphate. This is Pyridoxine 5'-phosphate synthase from Aliarcobacter butzleri (strain RM4018) (Arcobacter butzleri).